A 26-amino-acid polypeptide reads, in one-letter code: uncharacterized protein (26 aa).

This is an uncharacterized protein from Escherichia coli (strain K12).